The chain runs to 87 residues: Anaphase-promoting complex subunit 11 (87 aa).

The RING-type; atypical zinc finger occupies 35 to 77; it reads CVDCKIPGDDCPPVWGVCNHAFHMHCILKWLNANELQQCPMCR.

This sequence belongs to the RING-box family. The APC/C is composed of at least 13 subunits that stay tightly associated throughout the cell cycle: anapc1, anapc2, anapc3, anapc4, anapc5, anapc6, anapc7, anapc8, anapc10, anapc11, cdc20, cdc26 and cdh1.

The protein localises to the nucleus. It functions in the pathway protein modification; protein ubiquitination. Component of the anaphase promoting complex/cyclosome (APC/C), a cell cycle-regulated E3 ubiquitin-protein ligase complex that controls progression through mitosis and the G1 phase of the cell cycle. This Dictyostelium discoideum (Social amoeba) protein is Anaphase-promoting complex subunit 11 (anapc11).